Consider the following 170-residue polypeptide: UPF0316 protein CLJ_B0679 (170 aa).

2 helical membrane-spanning segments follow: residues 1 to 21 (MLSY…LMTI) and 36 to 56 (IIGF…LSGI).

This sequence belongs to the UPF0316 family.

The protein localises to the cell membrane. The protein is UPF0316 protein CLJ_B0679 of Clostridium botulinum (strain 657 / Type Ba4).